The sequence spans 237 residues: LexA repressor (237 aa).

The segment at residues 26–46 (FDEMKIALELTSKSGIHRLIT) is a DNA-binding region (H-T-H motif). Catalysis depends on for autocatalytic cleavage activity residues Ser158 and Lys196.

It belongs to the peptidase S24 family. Homodimer.

It catalyses the reaction Hydrolysis of Ala-|-Gly bond in repressor LexA.. Its function is as follows. Represses a number of genes involved in the response to DNA damage (SOS response), including recA and lexA. In the presence of single-stranded DNA, RecA interacts with LexA causing an autocatalytic cleavage which disrupts the DNA-binding part of LexA, leading to derepression of the SOS regulon and eventually DNA repair. This Bartonella quintana (strain Toulouse) (Rochalimaea quintana) protein is LexA repressor.